The following is a 326-amino-acid chain: L-threo-3-hydroxyaspartate ammonia-lyase (326 aa).

The residue at position 53 (lysine 53) is an N6-(pyridoxal phosphate)lysine. Pyridoxal 5'-phosphate-binding positions include asparagine 80, 179–183, and serine 304; that span reads GGGGL.

It belongs to the serine/threonine dehydratase family. In terms of assembly, monomer. Requires pyridoxal 5'-phosphate as cofactor. The cofactor is Mn(2+). Mg(2+) is required as a cofactor. Ca(2+) serves as cofactor.

It catalyses the reaction (3S)-3-hydroxy-L-aspartate = oxaloacetate + NH4(+). With respect to regulation, is strongly inhibited by hydroxylamine and EDTA in vitro. In terms of biological role, catalyzes the deamination of L-threo-3-hydroxyaspartate to oxaloacetate and ammonia. Shows a high specificity towards L-threo-3-hydroxyaspartate as other 3-hydroxyaminoacids, i.e. D,L-erythro- and D-threo-3-hydroxyaspartate, D-threonine, L-threonine, D,L-allothreonine, D-serine, and L-serine, are not substrates for this enzyme. Exhibits no detectable serine racemase activity. Is responsible for the 3-hydroxyaspartate resistance of S.cerevisiae, and thus may be involved in the detoxification of naturally occurring 3-hydroxyaspartate. This Saccharomyces cerevisiae (strain ATCC 204508 / S288c) (Baker's yeast) protein is L-threo-3-hydroxyaspartate ammonia-lyase (SRY1).